Here is a 297-residue protein sequence, read N- to C-terminus: N-acetylmuramic acid 6-phosphate etherase (297 aa).

Residues 56–219 (AIEAFNKGGR…STISMIGIGK (164 aa)) enclose the SIS domain. Glu84 serves as the catalytic Proton donor. Residue Glu115 is part of the active site.

The protein belongs to the GCKR-like family. MurNAc-6-P etherase subfamily. In terms of assembly, homodimer.

The catalysed reaction is N-acetyl-D-muramate 6-phosphate + H2O = N-acetyl-D-glucosamine 6-phosphate + (R)-lactate. It functions in the pathway amino-sugar metabolism; N-acetylmuramate degradation. In terms of biological role, specifically catalyzes the cleavage of the D-lactyl ether substituent of MurNAc 6-phosphate, producing GlcNAc 6-phosphate and D-lactate. The chain is N-acetylmuramic acid 6-phosphate etherase from Lactococcus lactis subsp. cremoris (strain MG1363).